A 446-amino-acid chain; its full sequence is Neuropeptide Y receptor type 5 (446 aa).

The Extracellular portion of the chain corresponds to 1–42 (MGSEIPDYYNKTLASENNTVATRNSGFPVWEDYKGSVDDLQY). N-linked (GlcNAc...) asparagine glycosylation is found at asparagine 10 and asparagine 17. Residues 43-63 (FLIGLYTFVSLLGFMGNLLIL) traverse the membrane as a helical segment. The Cytoplasmic segment spans residues 64–77 (MAVMRKRNQKTTVN). A helical membrane pass occupies residues 78 to 98 (FLIGNLAFSDILVVLFCSPFT). At 99–117 (LTSVLLDQWMFGKVMCHIM) the chain is on the extracellular side. A disulfide bridge links cysteine 114 with cysteine 198. A helical transmembrane segment spans residues 118–138 (PFLQCVTVLVSTLILISIAIV). The Cytoplasmic portion of the chain corresponds to 139–156 (RYHMIKHPVSNNLTANHG). The helical transmembrane segment at 157–177 (YFLIATVWTLGLAICSPLPVF) threads the bilayer. The Extracellular portion of the chain corresponds to 178–208 (HSLVELQESFGSAWLSSRYLCVESWPSDSYR). Residues 209–229 (IAFTISLLLVQYILPLVCLTV) form a helical membrane-spanning segment. Over 230–369 (SHTSVCRTIS…RKRSRSVFYR (140 aa)) the chain is Cytoplasmic. A disordered region spans residues 297-325 (RPAPAGPALESREGRPPGKVGSMQSQPPP). The helical transmembrane segment at 370-390 (LTVLILVFAVSWMPLHLFHVV) threads the bilayer. Residues 391–407 (TDFNDNLISNRHFKLVY) lie on the Extracellular side of the membrane. The helical transmembrane segment at 408 to 428 (CICHLLGMMSCCLNPILYGFL) threads the bilayer. Over 429–446 (NNGIKADLMSLIHCLHVS) the chain is Cytoplasmic. A lipid anchor (S-palmitoyl cysteine) is attached at cysteine 442.

This sequence belongs to the G-protein coupled receptor 1 family.

Its subcellular location is the cell membrane. In terms of biological role, receptor for neuropeptide Y and peptide YY. The activity of this receptor is mediated by G proteins that inhibit adenylate cyclase activity. Seems to be associated with food intake. Could be involved in feeding disorders. In Sus scrofa (Pig), this protein is Neuropeptide Y receptor type 5 (NPY5R).